The primary structure comprises 426 residues: Selenocysteine lyase (426 aa).

Position 239 is an N6-(pyridoxal phosphate)lysine (K239). C367 functions as the S-selanylcysteine intermediate in the catalytic mechanism.

This sequence belongs to the class-V pyridoxal-phosphate-dependent aminotransferase family. As to quaternary structure, homodimer. Pyridoxal 5'-phosphate is required as a cofactor.

Its subcellular location is the cytoplasm. The protein resides in the cytosol. The catalysed reaction is L-selenocysteine + AH2 = hydrogenselenide + L-alanine + A + H(+). Its function is as follows. Catalyzes the decomposition of L-selenocysteine to L-alanine and elemental selenium. This chain is Selenocysteine lyase (scly), found in Xenopus laevis (African clawed frog).